The chain runs to 329 residues: Beta-ketoacyl-[acyl-carrier-protein] synthase III (329 aa).

Active-site residues include Cys123 and His256. Positions 257-261 (QANIR) are ACP-binding. Asn286 is a catalytic residue.

The protein belongs to the thiolase-like superfamily. FabH family. In terms of assembly, homodimer.

It localises to the cytoplasm. The catalysed reaction is malonyl-[ACP] + acetyl-CoA + H(+) = 3-oxobutanoyl-[ACP] + CO2 + CoA. The protein operates within lipid metabolism; fatty acid biosynthesis. Its function is as follows. Catalyzes the condensation reaction of fatty acid synthesis by the addition to an acyl acceptor of two carbons from malonyl-ACP. Catalyzes the first condensation reaction which initiates fatty acid synthesis and may therefore play a role in governing the total rate of fatty acid production. Possesses both acetoacetyl-ACP synthase and acetyl transacylase activities. Its substrate specificity determines the biosynthesis of branched-chain and/or straight-chain of fatty acids. The polypeptide is Beta-ketoacyl-[acyl-carrier-protein] synthase III (Burkholderia thailandensis (strain ATCC 700388 / DSM 13276 / CCUG 48851 / CIP 106301 / E264)).